Here is a 444-residue protein sequence, read N- to C-terminus: Protein cereblon (444 aa).

The disordered stretch occupies residues Met-1–Asp-52. Residues Ala-23 to Asp-37 show a composition bias toward acidic residues. Residues Cys-80–Thr-321 enclose the Lon N-terminal domain. The CULT domain occupies Cys-320–Ile-428. Residues Cys-325 and Cys-328 each coordinate Zn(2+). Residues His-380, Trp-382, and Trp-388 each coordinate (S)-thalidomide. Zn(2+) is bound by residues Cys-393 and Cys-396.

It belongs to the CRBN family. In terms of assembly, component of a DCX (DDB1-CUL4-X-box) protein ligase complex, at least composed of CRBN, CUL4A, DDB1 and RBX1. Interacts directly with DDB1. Interacts with KCNT1. Interacts with ILF2. Interacts with TRAF6 and ECSIT. In terms of processing, ubiquitinated, ubiquitination is mediated by its own DCX protein ligase complex.

The protein resides in the cytoplasm. Its subcellular location is the nucleus. It is found in the membrane. Its pathway is protein modification; protein ubiquitination. In terms of biological role, substrate recognition component of a DCX (DDB1-CUL4-X-box) E3 protein ligase complex that mediates the ubiquitination and subsequent proteasomal degradation of target proteins, such as MEIS2, ILF2 or GLUL. Normal degradation of key regulatory proteins is required for normal limb outgrowth and expression of the fibroblast growth factor FGF8. Maintains presynaptic glutamate release and consequently cognitive functions, such as memory and learning, by negatively regulating large-conductance calcium-activated potassium (BK) channels in excitatory neurons. Likely to function by regulating the assembly and neuronal surface expression of BK channels via its interaction with KCNT1. May also be involved in regulating anxiety-like behaviors via a BK channel-independent mechanism. Plays a negative role in TLR4 signaling by interacting with TRAF6 and ECSIT, leading to inhibition of ECSIT ubiquitination, an important step of the signaling. The sequence is that of Protein cereblon (CRBN) from Bos taurus (Bovine).